Consider the following 67-residue polypeptide: ATP synthase F(0) complex subunit 8 (67 aa).

Residues 8-24 form a helical membrane-spanning segment; sequence TWSITIMSMIMTLFIVF. Lysine 54 carries the post-translational modification N6-acetyllysine; alternate. At lysine 54 the chain carries N6-succinyllysine; alternate. The residue at position 57 (lysine 57) is an N6-acetyllysine.

Belongs to the ATPase protein 8 family. In terms of assembly, component of the ATP synthase complex composed at least of ATP5F1A/subunit alpha, ATP5F1B/subunit beta, ATP5MC1/subunit c (homooctomer), MT-ATP6/subunit a, MT-ATP8/subunit 8, ATP5ME/subunit e, ATP5MF/subunit f, ATP5MG/subunit g, ATP5MK/subunit k, ATP5MJ/subunit j, ATP5F1C/subunit gamma, ATP5F1D/subunit delta, ATP5F1E/subunit epsilon, ATP5PF/subunit F6, ATP5PB/subunit b, ATP5PD/subunit d, ATP5PO/subunit OSCP. ATP synthase complex consists of a soluble F(1) head domain (subunits alpha(3) and beta(3)) - the catalytic core - and a membrane F(0) domain - the membrane proton channel (subunits c, a, 8, e, f, g, k and j). These two domains are linked by a central stalk (subunits gamma, delta, and epsilon) rotating inside the F1 region and a stationary peripheral stalk (subunits F6, b, d, and OSCP). Interacts with PRICKLE3.

The protein resides in the mitochondrion membrane. Its function is as follows. Subunit 8, of the mitochondrial membrane ATP synthase complex (F(1)F(0) ATP synthase or Complex V) that produces ATP from ADP in the presence of a proton gradient across the membrane which is generated by electron transport complexes of the respiratory chain. ATP synthase complex consist of a soluble F(1) head domain - the catalytic core - and a membrane F(1) domain - the membrane proton channel. These two domains are linked by a central stalk rotating inside the F(1) region and a stationary peripheral stalk. During catalysis, ATP synthesis in the catalytic domain of F(1) is coupled via a rotary mechanism of the central stalk subunits to proton translocation. In vivo, can only synthesize ATP although its ATP hydrolase activity can be activated artificially in vitro. Part of the complex F(0) domain. This Felis catus (Cat) protein is ATP synthase F(0) complex subunit 8.